Consider the following 160-residue polypeptide: uncharacterized protein (160 aa).

A coiled-coil region spans residues 69–145 (NQLLNMMAQA…EQREHVKEQR (77 aa)). 2 disordered regions span residues 82–109 (GVRL…LKNA) and 129–160 (KKKQ…HRGK). Residues 86–99 (QGRRQKKINPKRLQ) show a composition bias toward basic residues. The segment covering 133–146 (IMKEQREHVKEQRY) has biased composition (basic and acidic residues). Residues 147 to 160 (MLKKQKAKKKHRGK) are compositionally biased toward basic residues.

This is an uncharacterized protein from Bacillus subtilis (strain 168).